A 351-amino-acid chain; its full sequence is Phospho-N-acetylmuramoyl-pentapeptide-transferase (351 aa).

A run of 10 helical transmembrane segments spans residues Ile-22–Trp-42, Thr-65–Thr-85, Phe-87–Ile-107, Phe-128–Asp-148, Tyr-158–Met-178, Gly-190–Val-210, Leu-225–Leu-245, Val-254–Val-274, Leu-279–Val-299, and Lys-328–Ile-348.

It belongs to the glycosyltransferase 4 family. MraY subfamily. Requires Mg(2+) as cofactor.

The protein resides in the cell inner membrane. It carries out the reaction UDP-N-acetyl-alpha-D-muramoyl-L-alanyl-gamma-D-glutamyl-meso-2,6-diaminopimeloyl-D-alanyl-D-alanine + di-trans,octa-cis-undecaprenyl phosphate = di-trans,octa-cis-undecaprenyl diphospho-N-acetyl-alpha-D-muramoyl-L-alanyl-D-glutamyl-meso-2,6-diaminopimeloyl-D-alanyl-D-alanine + UMP. Its pathway is cell wall biogenesis; peptidoglycan biosynthesis. Its function is as follows. Catalyzes the initial step of the lipid cycle reactions in the biosynthesis of the cell wall peptidoglycan: transfers peptidoglycan precursor phospho-MurNAc-pentapeptide from UDP-MurNAc-pentapeptide onto the lipid carrier undecaprenyl phosphate, yielding undecaprenyl-pyrophosphoryl-MurNAc-pentapeptide, known as lipid I. The protein is Phospho-N-acetylmuramoyl-pentapeptide-transferase of Nautilia profundicola (strain ATCC BAA-1463 / DSM 18972 / AmH).